A 921-amino-acid chain; its full sequence is Isoleucine--tRNA ligase (921 aa).

Positions 57-67 match the 'HIGH' region motif; that stretch reads PYANGELHMGH. Residue E552 coordinates L-isoleucyl-5'-AMP. Residues 593–597 carry the 'KMSKS' region motif; the sequence is KMSKS. K596 serves as a coordination point for ATP. Zn(2+)-binding residues include C888, C891, C908, and C911.

This sequence belongs to the class-I aminoacyl-tRNA synthetase family. IleS type 1 subfamily. Monomer. The cofactor is Zn(2+).

It localises to the cytoplasm. The catalysed reaction is tRNA(Ile) + L-isoleucine + ATP = L-isoleucyl-tRNA(Ile) + AMP + diphosphate. Functionally, catalyzes the attachment of isoleucine to tRNA(Ile). As IleRS can inadvertently accommodate and process structurally similar amino acids such as valine, to avoid such errors it has two additional distinct tRNA(Ile)-dependent editing activities. One activity is designated as 'pretransfer' editing and involves the hydrolysis of activated Val-AMP. The other activity is designated 'posttransfer' editing and involves deacylation of mischarged Val-tRNA(Ile). This chain is Isoleucine--tRNA ligase, found in Listeria innocua serovar 6a (strain ATCC BAA-680 / CLIP 11262).